The chain runs to 489 residues: Glycogen synthase (489 aa).

K15 serves as a coordination point for ADP-alpha-D-glucose.

Belongs to the glycosyltransferase 1 family. Bacterial/plant glycogen synthase subfamily.

The catalysed reaction is [(1-&gt;4)-alpha-D-glucosyl](n) + ADP-alpha-D-glucose = [(1-&gt;4)-alpha-D-glucosyl](n+1) + ADP + H(+). It participates in glycan biosynthesis; glycogen biosynthesis. In terms of biological role, synthesizes alpha-1,4-glucan chains using ADP-glucose. In Francisella tularensis subsp. mediasiatica (strain FSC147), this protein is Glycogen synthase.